Reading from the N-terminus, the 342-residue chain is 3-isopropylmalate dehydrogenase (342 aa).

The substrate site is built by Arg92, Arg102, Arg126, and Asp216. Asp216, Asp240, and Asp244 together coordinate Mg(2+). 276–288 provides a ligand contact to NAD(+); that stretch reads GSAPDIAGKGIAD.

The protein belongs to the isocitrate and isopropylmalate dehydrogenases family. LeuB type 2 subfamily. In terms of assembly, homodimer. It depends on Mg(2+) as a cofactor. Requires Mn(2+) as cofactor.

It localises to the cytoplasm. It carries out the reaction (2R,3S)-3-isopropylmalate + NAD(+) = 4-methyl-2-oxopentanoate + CO2 + NADH. Its pathway is amino-acid biosynthesis; L-leucine biosynthesis; L-leucine from 3-methyl-2-oxobutanoate: step 3/4. Catalyzes the oxidation of 3-carboxy-2-hydroxy-4-methylpentanoate (3-isopropylmalate) to 3-carboxy-4-methyl-2-oxopentanoate. The product decarboxylates to 4-methyl-2 oxopentanoate. In Corynebacterium kroppenstedtii (strain DSM 44385 / JCM 11950 / CIP 105744 / CCUG 35717), this protein is 3-isopropylmalate dehydrogenase.